The sequence spans 270 residues: MRVVYTSPRIENLQFLKSEFSNYSVIVLEEPKNDLFHDVLEGKITVDLYVRKISTQFPLYTRKLIEMLKELKSREIMQVEPYLEEVERLKNFSEGDERVREMEKRVNALYIDYTESFLKSDFDEIVEKVLRFSEAEAERIMLRDEMRAKALDDLDEAVIEAGMNHIKLAEILDAESVRIPEIIAERLGTRYLENPGEKLLKAFIFEEDDDLRLLAARNLIFTSLLEKREMEPDFDGDYPHFTHEQKLVRFVDKLDYEKCRKLFYRFWSPR.

This is an uncharacterized protein from Archaeoglobus fulgidus (strain ATCC 49558 / DSM 4304 / JCM 9628 / NBRC 100126 / VC-16).